Here is a 195-residue protein sequence, read N- to C-terminus: Sec-independent protein translocase protein TatB (195 aa).

A helical membrane pass occupies residues 1–21 (MFDIGFSELVLIFIVGLVVLG). A disordered region spans residues 166–195 (DESQFAAYYPPDDDLASPTPSQPQDKQNVS). The span at 183 to 195 (PTPSQPQDKQNVS) shows a compositional bias: polar residues.

Belongs to the TatB family. The Tat system comprises two distinct complexes: a TatABC complex, containing multiple copies of TatA, TatB and TatC subunits, and a separate TatA complex, containing only TatA subunits. Substrates initially bind to the TatABC complex, which probably triggers association of the separate TatA complex to form the active translocon.

It localises to the cell inner membrane. In terms of biological role, part of the twin-arginine translocation (Tat) system that transports large folded proteins containing a characteristic twin-arginine motif in their signal peptide across membranes. Together with TatC, TatB is part of a receptor directly interacting with Tat signal peptides. TatB may form an oligomeric binding site that transiently accommodates folded Tat precursor proteins before their translocation. This Actinobacillus pleuropneumoniae serotype 5b (strain L20) protein is Sec-independent protein translocase protein TatB.